Reading from the N-terminus, the 332-residue chain is T-cell leukemia homeobox protein 1 (332 aa).

The homeobox DNA-binding region spans 203 to 262; the sequence is KKKPRTSFTRLQICELEKRFHRQKYLASAERAALAKALKMTDAQVKTWFQNRRTKWRRQT. K238 is modified (N6-acetyllysine).

Expressed in various embryonic tissues, including branchial arches, some component of the nervous system and spleen.

The protein resides in the nucleus. Its function is as follows. Controls the genesis of the spleen. Binds to the DNA sequence 5'-GGCGGTAAGTGG-3'. The polypeptide is T-cell leukemia homeobox protein 1 (Tlx1) (Mus musculus (Mouse)).